The sequence spans 486 residues: N-succinylglutamate 5-semialdehyde dehydrogenase (486 aa).

Residue 220-225 (GSSRTG) participates in NAD(+) binding. Active-site residues include Glu-243 and Cys-277.

Belongs to the aldehyde dehydrogenase family. AstD subfamily.

The enzyme catalyses N-succinyl-L-glutamate 5-semialdehyde + NAD(+) + H2O = N-succinyl-L-glutamate + NADH + 2 H(+). It participates in amino-acid degradation; L-arginine degradation via AST pathway; L-glutamate and succinate from L-arginine: step 4/5. Functionally, catalyzes the NAD-dependent reduction of succinylglutamate semialdehyde into succinylglutamate. This chain is N-succinylglutamate 5-semialdehyde dehydrogenase, found in Shewanella baltica (strain OS185).